The sequence spans 290 residues: Short chain dehydrogenase/reductase nsrO (290 aa).

I37 and K149 together coordinate NADP(+). Active-site proton donor residues include S168 and Y182. 3 residues coordinate NADP(+): Y182, K186, and T221. K186 acts as the Lowers pKa of active site Tyr in catalysis.

Belongs to the short-chain dehydrogenases/reductases (SDR) family.

Its pathway is secondary metabolite biosynthesis. Short chain dehydrogenase/reductase; part of the gene cluster that mediates the biosynthesis of the tetrahydroxanthone dimer neosartorin, which exhibits antibacterial activity. The two different monomeric units appear to be synthesized by the same set of enzymes, among which the Baeyer-Villiger monooxygenase nsrF is the key enzyme for the divergence of the biosynthetic routes. The pathway begins with the synthesis of atrochrysone thioester by the polyketide synthase nsrB. The atrochrysone carboxyl ACP thioesterase nsrC then breaks the thioester bond and releases the atrochrysone carboxylic acid from AacuL. Atrochrysone carboxylic acid is decarboxylated by the decarboxylase nsrE, and oxidized by the anthrone oxygenase nsrD to yield emodin. Emodin is then reduced to emodin hydroquinone by the oxidoreductase nsrR. A-ring reduction by the short chain dehydrogenase nsrJ, dehydration by the scytalone dehydratase-like protein nsrI and probable spontaneous re-oxidation, results in overall deoxygenation to chrysophanol. The Baeyer-Villiger monooxygenase nsrF accepts chrysophanol as a substrate to insert one oxygen atom at two different positions to yield the precursors of both monomric units. NsrF is promiscuous/flexible in interacting with the 2 (non methylated and methylated) aromatic rings of chrysophanol, thus diverging the biosynthetic pathway at this point. After the hydrolysis of the lactones, methylesterification by the methyltransferase nsrG yields respectively moniliphenone and 2,2',6'-trihydroxy-4-methyl-6-methoxya-cyldiphenylmethanone. The next steps are the hydroxylation by the FAD-dependent monooxygenase nsrK, followed by isomerization by the monooxygenase nsrQ. The short chain dehydrogenase/reductase nsrO then catalyzes the C-5 ketoreduction to give the xanthone skeleton of blennolide C and 5-acetylblennolide A. The acetyltransferase nsrL has a strict substrate specificity and uses only blennolide A but not blennolide C to yield 5-acetylblennolide A as the single-acetylated product. In the final step of the biosynthesis, the heterodimerization of the 2 xanthones, blennolide C and 5-acetylblennolide A, is catalyzed by the cytochrome P450 monooxygenase nsrP. NsrP can utilize at least three different xanthones as its substrates to perform the dimerization reaction. This is Short chain dehydrogenase/reductase nsrO from Aspergillus novofumigatus (strain IBT 16806).